The sequence spans 593 residues: DNA primase (593 aa).

The segment at 38–62 (CPFHQEKTPSFTVSDSKRFFYCFGC) adopts a CHC2-type zinc-finger fold. The Toprim domain occupies 250-332 (NRSILVEGYF…EKKISFIRLP (83 aa)). Glu256, Asp300, and Asp302 together coordinate Mg(2+).

The protein belongs to the DnaG primase family. Monomer. Interacts with DnaB. Requires Zn(2+) as cofactor. The cofactor is Mg(2+).

The catalysed reaction is ssDNA + n NTP = ssDNA/pppN(pN)n-1 hybrid + (n-1) diphosphate.. RNA polymerase that catalyzes the synthesis of short RNA molecules used as primers for DNA polymerase during DNA replication. The sequence is that of DNA primase from Rickettsia typhi (strain ATCC VR-144 / Wilmington).